A 412-amino-acid chain; its full sequence is Probable tRNA sulfurtransferase (412 aa).

Positions 1-22 (MPDIFTDNTDKQDSDPSRQGFE) are disordered. The 109-residue stretch at 82–190 (PRAAEAAADV…QNLAYVYLET (109 aa)) folds into the THUMP domain. ATP-binding positions include 208–209 (LM), Lys-292, Gly-314, and Gln-323.

The protein belongs to the ThiI family.

It localises to the cytoplasm. It carries out the reaction [ThiI sulfur-carrier protein]-S-sulfanyl-L-cysteine + a uridine in tRNA + 2 reduced [2Fe-2S]-[ferredoxin] + ATP + H(+) = [ThiI sulfur-carrier protein]-L-cysteine + a 4-thiouridine in tRNA + 2 oxidized [2Fe-2S]-[ferredoxin] + AMP + diphosphate. It catalyses the reaction [ThiS sulfur-carrier protein]-C-terminal Gly-Gly-AMP + S-sulfanyl-L-cysteinyl-[cysteine desulfurase] + AH2 = [ThiS sulfur-carrier protein]-C-terminal-Gly-aminoethanethioate + L-cysteinyl-[cysteine desulfurase] + A + AMP + 2 H(+). It participates in cofactor biosynthesis; thiamine diphosphate biosynthesis. Functionally, catalyzes the ATP-dependent transfer of a sulfur to tRNA to produce 4-thiouridine in position 8 of tRNAs, which functions as a near-UV photosensor. Also catalyzes the transfer of sulfur to the sulfur carrier protein ThiS, forming ThiS-thiocarboxylate. This is a step in the synthesis of thiazole, in the thiamine biosynthesis pathway. The sulfur is donated as persulfide by IscS. The chain is Probable tRNA sulfurtransferase from Methanosarcina acetivorans (strain ATCC 35395 / DSM 2834 / JCM 12185 / C2A).